Reading from the N-terminus, the 656-residue chain is Replication protein A 70 kDa DNA-binding subunit A (656 aa).

The OB DNA-binding region spans 225 to 307 (AIKARVTAKG…NHLNNEWEIL (83 aa)). The C4-type zinc finger occupies 516–542 (CPNMIGDRQCNKKVTKSTNGNWTCDKC).

This sequence belongs to the replication factor A protein 1 family. In terms of assembly, heterotrimer of RPA1, RPA2 and RPA3 (canonical replication protein A complex). Interacts with RPA2B. In terms of tissue distribution, expressed in root tips, roots, shoot apical meristem (SAM), young leaves, flag leaves and ears, and at lower levels in mature leaves.

The protein localises to the nucleus. In terms of biological role, component of the replication protein A complex (RPA) required for DNA recombination, repair and replication. The activity of RPA is mediated by single-stranded DNA binding and protein interactions. Plays an essential role in meiotic and somatic DNA repair, but is dispensable for DNA replication and homologous recombination. Is essential for normal progression through meiosis in pollen mother cells. Is involved in repair of double-strand DNA breaks (DSBs) induced by genotoxic stresses. The polypeptide is Replication protein A 70 kDa DNA-binding subunit A (RPA1A) (Oryza sativa subsp. japonica (Rice)).